A 287-amino-acid polypeptide reads, in one-letter code: Cell wall protein PIR5 (287 aa).

An N-terminal signal peptide occupies residues 1-21; that stretch reads MHYKKAFLASLLSSIALTAYA. A propeptide spanning residues 22–62 is cleaved from the precursor; it reads PPEPWATLTPSSKMDGGTTEYRTSFGLAVIPFTVTESKVKR. PIR1/2/3 repeat units follow at residues 62 to 80, 81 to 99, 104 to 122, and 144 to 162; these read RNVI…TQKL, PHPV…TQKV, SHIV…TAKN, and ATAV…ISSA.

Belongs to the PIR protein family. Covalently linked to beta-1,3-glucan of the inner cell wall layer via an alkali-sensitive ester linkage between the gamma-carboxyl group of glutamic acids, arising from specific glutamines within the PIR1/2/3 repeats, and hydroxyl groups of glucoses of beta-1,3-glucan chains.

The protein localises to the secreted. It is found in the cell wall. Functionally, component of the outer cell wall layer. May be involved in meiosis and sporulation. The protein is Cell wall protein PIR5 (PIR5) of Saccharomyces cerevisiae (strain RM11-1a) (Baker's yeast).